A 581-amino-acid chain; its full sequence is Sodium/hydrogen exchanger 8 (581 aa).

Transmembrane regions (helical) follow at residues 60–80, 84–104, 123–143, 156–176, 191–211, 264–284, 311–331, 354–374, 379–399, 417–437, and 451–471; these read MTIFFSLLVLAICIILVHLLI, LHFLPESVAVVSLGILMGAVI, PNMFFLLLLPPIIFESGYSLH, LFAVFGTAISAFVVGGGIYFL, FAFGSLISAVDPVATIAIFNA, FLKMFFGSAALGTLTGLISAL, GLAEGISLSGIMAILFSGIVM, VAFLCETCVFAFLGLSIFSFP, ISFVIWCIVLVLFGRAVNIFP, MFIMWFSGLRGAIPYALSLHL, and TTIVIVLFTILLLGGSTMPLI. Thr-510 is subject to Phosphothreonine. 2 positions are modified to phosphoserine: Ser-571 and Ser-573.

Belongs to the monovalent cation:proton antiporter 1 (CPA1) transporter (TC 2.A.36) family. Ubiquitous. Strongly expressed in skeletal muscle and kidney. Detected throughout the entire gastrointestinal tract, with high expression detected in stomach, duodenum and ascending colon.

It localises to the golgi apparatus membrane. Its subcellular location is the golgi apparatus. The protein localises to the trans-Golgi network membrane. The protein resides in the endosome. It is found in the multivesicular body membrane. It localises to the apical cell membrane. Its subcellular location is the cytoplasmic vesicle. The protein localises to the secretory vesicle. The protein resides in the acrosome. It carries out the reaction Na(+)(in) + H(+)(out) = Na(+)(out) + H(+)(in). Its activity is regulated as follows. HOE642 inhibits SLC9A8 activity. In terms of biological role, na(+)/H(+) antiporter. Mediates the electoneutral exchange of intracellular H(+) ions for extracellular Na(+) in 1:1 stoichiometry. Acts as an Na(+)/H(+) exchanger in the trans-Golgi. Contributes to the regulation of pH regulation of Golgi apparatus, and consequently, in protein trafficking and endosomal morphology. In germ cells, plays a crucial role in acrosome biogenesis and sperm development, probably by playing a role in the fusion of the Golgi-derived vesicles that form the acrosomal cap. Can also be active at the cell surface of specialized cells. In the small intestine, at the cell membrane, plays a major physiological role in transepithelial absorption of Na(+) and regulates intracellular pH homeostasis of intestinal epithelial cells. Acts as an important regulator of mucosal integrity in the intestine and in the stomach, could mediate the pH fluctuation necessary for mucin exocytosis or assist membrane trafficking of other proteins. Plays a role in photoreceptor survival and in the maintenance of intracellular pH homeostasis in retinal pigment epithelium (RPE cells). The polypeptide is Sodium/hydrogen exchanger 8 (Homo sapiens (Human)).